A 54-amino-acid polypeptide reads, in one-letter code: UPF0391 membrane protein Pmen_0080 (54 aa).

A run of 2 helical transmembrane segments spans residues 4 to 24 (WALT…GGIA) and 28 to 48 (AGIA…SFIM).

It belongs to the UPF0391 family.

It is found in the cell membrane. The protein is UPF0391 membrane protein Pmen_0080 of Ectopseudomonas mendocina (strain ymp) (Pseudomonas mendocina).